Reading from the N-terminus, the 387-residue chain is Protein FAM153B (387 aa).

Disordered stretches follow at residues 233-256 (SYNG…RGDL) and 327-374 (TITG…KKSR). The segment covering 336 to 345 (SASPSSAPAE) has biased composition (low complexity). Residues 347 to 359 (ATEKTKVEEEVKT) show a composition bias toward basic and acidic residues. Residues 360–374 (RKPKKKTRKPSKKSR) are compositionally biased toward basic residues.

It belongs to the FAM153 family.

In Homo sapiens (Human), this protein is Protein FAM153B (FAM153B).